A 192-amino-acid chain; its full sequence is ER membrane protein complex subunit 8/9 homolog (192 aa).

An MPN domain is found at 5 to 135 (ISITTEALSK…LVSIDKVGSD (131 aa)).

It belongs to the EMC8/EMC9 family.

The sequence is that of ER membrane protein complex subunit 8/9 homolog from Dictyostelium discoideum (Social amoeba).